The following is a 550-amino-acid chain: Glutamine--tRNA ligase (550 aa).

The 'HIGH' region signature appears at 34–44 (PEPNGYLHLGH). ATP contacts are provided by residues 35 to 37 (EPN) and 41 to 47 (HLGHAKS). 2 residues coordinate L-glutamine: Asp-67 and Tyr-212. ATP is bound by residues Thr-231, 261–262 (RL), and 269–271 (LSK). The 'KMSKS' region motif lies at 268–272 (VLSKR).

Belongs to the class-I aminoacyl-tRNA synthetase family. In terms of assembly, monomer.

The protein localises to the cytoplasm. It carries out the reaction tRNA(Gln) + L-glutamine + ATP = L-glutaminyl-tRNA(Gln) + AMP + diphosphate. In Buchnera aphidicola subsp. Baizongia pistaciae (strain Bp), this protein is Glutamine--tRNA ligase.